The sequence spans 707 residues: MLNPIVRKFQYGQHTITLETGVIARQANAAVMASMDETAVFVTVVGQKKIHTGQKFFPLTVNYQERTYAAGRIPGGFFRREGRPSENEILTARLIDRPLRPLFPKKFLNEIQIIATVVSVNPQINPDIISIIGASAALSLSGIPFYGPVGAARVGYINNQYILNPISDDMKNSSLDLVVSGTQNAILMVEAESKILSEEKILGAIIFGHQQQQVVINNIRSLSNEASKLPWVISYPETNKTLELKIINSFEKNISDAYVIFNKQDRIEKLNSIKENIIKLFLDENSNIDTLEIEDIFQKIEKKVVRKRILSNQTRIDGREKDMIRALDVRTGILPRTHGSALFTRGETQSLVSVTLGTSRDAQNLDELLGDRIDNFLFHYNFPPYSVGEIGMVGSPKRREIGHGRLAKRSLLAVMPTLENFPYTIRVVSEITESNGSSSMASVCGASLALMDAGVPIKSAVAGISMGLVKEGNQHVLLSDILGDEDHLGDMDFKVAGTEEGITALQMDMKIEGITNEIIHSALNEARLARLHILNVMNQALNESRSEISEFAPRIHIIKINPEKIKDVIGKGGSVIRMLTEETGTIIEIEDDGTVKISSTVKEKAKNAIRRIKEITAEIEVGRIYSGKVTRIVDFGAFVSIGLGKEGLVHISQISDKRVDKVSNHLKIDQIISVKVLEIDRQGRLRLSIKEIDSSILSNKSINNSII.

Residues Asp-486 and Asp-492 each coordinate Mg(2+). The KH domain occupies Pro-553 to Ile-612. One can recognise an S1 motif domain in the interval Gly-622–Lys-690.

Belongs to the polyribonucleotide nucleotidyltransferase family. In terms of assembly, component of the RNA degradosome, which is a multiprotein complex involved in RNA processing and mRNA degradation. It depends on Mg(2+) as a cofactor.

It is found in the cytoplasm. It catalyses the reaction RNA(n+1) + phosphate = RNA(n) + a ribonucleoside 5'-diphosphate. Involved in mRNA degradation. Catalyzes the phosphorolysis of single-stranded polyribonucleotides processively in the 3'- to 5'-direction. The chain is Polyribonucleotide nucleotidyltransferase from Buchnera aphidicola subsp. Acyrthosiphon pisum (strain 5A).